Here is a 180-residue protein sequence, read N- to C-terminus: Crossover junction endodeoxyribonuclease RuvC (180 aa).

Active-site residues include Asp-7, Glu-66, and Asp-138. Residues Asp-7, Glu-66, and Asp-138 each contribute to the Mg(2+) site.

This sequence belongs to the RuvC family. In terms of assembly, homodimer which binds Holliday junction (HJ) DNA. The HJ becomes 2-fold symmetrical on binding to RuvC with unstacked arms; it has a different conformation from HJ DNA in complex with RuvA. In the full resolvosome a probable DNA-RuvA(4)-RuvB(12)-RuvC(2) complex forms which resolves the HJ. Mg(2+) is required as a cofactor.

Its subcellular location is the cytoplasm. The catalysed reaction is Endonucleolytic cleavage at a junction such as a reciprocal single-stranded crossover between two homologous DNA duplexes (Holliday junction).. Functionally, the RuvA-RuvB-RuvC complex processes Holliday junction (HJ) DNA during genetic recombination and DNA repair. Endonuclease that resolves HJ intermediates. Cleaves cruciform DNA by making single-stranded nicks across the HJ at symmetrical positions within the homologous arms, yielding a 5'-phosphate and a 3'-hydroxyl group; requires a central core of homology in the junction. The consensus cleavage sequence is 5'-(A/T)TT(C/G)-3'. Cleavage occurs on the 3'-side of the TT dinucleotide at the point of strand exchange. HJ branch migration catalyzed by RuvA-RuvB allows RuvC to scan DNA until it finds its consensus sequence, where it cleaves and resolves the cruciform DNA. The chain is Crossover junction endodeoxyribonuclease RuvC from Burkholderia orbicola (strain AU 1054).